A 249-amino-acid chain; its full sequence is MSSVTLTTTTTTTSTPPKPTPKDEPQEQIYTPWRLFIYDIWVLGIVSTLAWGCRISTYLIPLFRSNVGKKHLDIGAGTGYYLNQARIPSTTQLTIVDNETHALNVALARCKHPSTQTHGIVTDILQPSPFPETYLTNNDKKFDSVSMYYLLHCLPVPVASKCKIFTHLKKYMTEDGVVHGANVLGKGVRKDNWFARIIRRGCLNHGVFHNEEDNAYEFERALRENFWEVETWVVGSVFVFRAKRPILDA.

Residues 1–15 (MSSVTLTTTTTTTST) show a composition bias toward low complexity. Residues 1-26 (MSSVTLTTTTTTTSTPPKPTPKDEPQ) are disordered.

Belongs to the methyltransferase superfamily.

It catalyses the reaction 2-acetyl-3,4a,8,10,11,12a-hexahydroxy-1,4,4a,5,12,12a-hexahydrotetracene-1,12-dione + S-adenosyl-L-methionine = TAN-1612 + S-adenosyl-L-homocysteine + H(+). Its pathway is secondary metabolite biosynthesis. Functionally, O-methyltransferase; part of the gene cluster that mediates the biosynthesis of the linear tetracyclic TAN-1612 neuropeptide Y receptor antagonist. The decaketide backbone of TAN-1612 is synthesized by the non-reducing polyketide synthase adaA via condensation of one acetyl-CoA starter unit with 9 malonyl-CoA units. The FAD-dependent monooxygenase adaC then performs hydroxylation at C2 while the polaketide chain is still attached to the NRPKS adaA. The alpha-hydroxylation step at C2 appears to be crucial for the following C18-C1 Claisen cyclization and release of the C9-hydroxyl version of TAN-1612 from the NRPKS adaA, two steps performed by the lactamase-like protein adaB. Finally, the O-methyltransferase adaD performs the C9 O-methylation to complete the biosynthesis of TAN-1612. In Aspergillus niger (strain ATCC MYA-4892 / CBS 513.88 / FGSC A1513), this protein is O-methyltransferase adaD.